We begin with the raw amino-acid sequence, 379 residues long: Mating-type protein MAT-1 (379 aa).

A DNA-binding region (alpha box) is located at residues arginine 60–arginine 117.

It belongs to the MATALPHA1 family.

Its subcellular location is the nucleus. Functionally, mating type proteins are sequence specific DNA-binding proteins that act as master switches in fungal differentiation by controlling gene expression in a cell type-specific fashion. Transcriptional activator that induces the transcription of alpha-specific genes. This Curvularia kusanoi (Cochliobolus kusanoi) protein is Mating-type protein MAT-1 (MAT1).